The following is a 96-amino-acid chain: Cytoplasmic envelopment protein 3 (96 aa).

Gly-2 carries the N-myristoyl glycine; by host lipid modification. Residues 37–43 (DIESEEE) form an asp/Glu-rich (acidic) region. Ser-40 is modified (phosphoserine). The tract at residues 50–96 (PDVRVVTRAPGPQYRRPSDPPSRHTRRRDPDVARPPATLTPPLSDSE) is disordered. Basic and acidic residues predominate over residues 65 to 81 (RPSDPPSRHTRRRDPDV).

Belongs to the herpesviridae cytoplasmic envelopment protein 3 family. Interacts with cytoplasmic envelopment protein 2; this interaction is essential for the proper localization of each protein to the assembly complex and thus for the production of infectious virus. Interacts with gE (via C-terminus). Interacts with gD (via C-terminus). Interacts with UL56. In terms of processing, myristoylation and palmitoylation (probably on one or more of the nearby cysteines at the N-terminus) enable membrane-binding and Golgi apparatus-specific targeting and are essential for efficient packaging. Post-translationally, phosphorylated. Phosphorylation does not seem to be required for recycling to the host Golgi apparatus. Packaging is selective for underphosphorylated forms.

It is found in the virion tegument. The protein resides in the virion membrane. It localises to the host cell membrane. Its subcellular location is the host Golgi apparatus membrane. Its function is as follows. Plays an important role in the cytoplasmic envelopment of tegument proteins and capsids during the assembly and egress processes. Also participates in viral entry at the fusion step probably by regulating the core fusion machinery. The chain is Cytoplasmic envelopment protein 3 from Homo sapiens (Human).